A 714-amino-acid polypeptide reads, in one-letter code: Palmitoyltransferase ZDHHC5 (714 aa).

The Cytoplasmic portion of the chain corresponds to 1–13; it reads MPAESAKRFKPSK. A helical transmembrane segment spans residues 14–34; that stretch reads YVPVSAAAIFLVGATTLFFAF. The Extracellular segment spans residues 35-52; it reads TCPGLSLSVSPAVPVYNA. A helical transmembrane segment spans residues 53-73; sequence VVFLFVLANFSMATFMDPGVF. The Cytoplasmic portion of the chain corresponds to 74-148; it reads PRAEEDEDKE…NCIGRRNYRY (75 aa). Tyrosine 91 is subject to Phosphotyrosine. A DHHC domain is found at 104 to 154; sequence KWCATCRFYRPPRCSHCSVCDNCVEEFDHHCPWVNNCIGRRNYRYFFLFLL. Cysteine 134 serves as the catalytic S-palmitoyl cysteine intermediate. The helical transmembrane segment at 149–169 threads the bilayer; the sequence is FFLFLLSLTAHITGVFGFGLL. The Extracellular segment spans residues 170–191; the sequence is YVLYHMEELSGVRTAVTMAVMC. Residues 192–212 form a helical membrane-spanning segment; it reads VAGLFFIPVAGLTGFHVVLVA. Residues 213–714 are Cytoplasmic-facing; sequence RGRTTNEQVT…VGGTTYEISV (502 aa). A Phosphoserine modification is found at serine 247. Positions 289–714 are disordered; that stretch reads GELRRTKSKG…VGGTTYEISV (426 aa). At threonine 294 the chain carries Phosphothreonine. Phosphoserine is present on residues serine 296 and serine 299. A Phosphothreonine modification is found at threonine 303. Phosphoserine is present on serine 345. 2 positions are modified to phosphothreonine: threonine 348 and threonine 350. A compositionally biased stretch (low complexity) spans 359-373; it reads SSSSASAAMPHSSSA. Residues serine 380, serine 398, serine 406, and serine 409 each carry the phosphoserine modification. Positions 388-398 are enriched in polar residues; the sequence is AESSRQPSYRS. Phosphothreonine is present on threonine 411. Positions 422–432 are enriched in low complexity; that stretch reads SSGSRSSSLKS. A phosphoserine mark is found at serine 425, serine 429, and serine 432. Phosphothreonine is present on threonine 436. A compositionally biased stretch (polar residues) spans 445–478; that stretch reads SIRSEGTTSTSYKSLANQTRNGSLSYDSLLTPSD. Residues serine 529 and serine 554 each carry the phosphoserine modification. The residue at position 616 (arginine 616) is an Omega-N-methylarginine. Serine 620 is modified (phosphoserine). Threonine 658 bears the Phosphothreonine mark. A compositionally biased stretch (polar residues) spans 667–678; it reads TAYSKSNGQPKS. Over residues 683–692 the composition is skewed to pro residues; that stretch reads PPGPGQPPLS. A Phosphoserine modification is found at serine 693. Arginine 696 is subject to Omega-N-methylarginine.

The protein belongs to the DHHC palmitoyltransferase family. ERF2/ZDHHC9 subfamily. Phosphorylation regulates association with endocytic proteins and its subcellular localization. Phosphorylation by LYN during fatty acid uptake leads to inactivation of the activity. Post-translationally, autopalmitoylated. Palmitoylation of the C-terminal tail regulates stimulation-dependent plasma membrane motility.

It is found in the cell membrane. The catalysed reaction is L-cysteinyl-[protein] + hexadecanoyl-CoA = S-hexadecanoyl-L-cysteinyl-[protein] + CoA. Functionally, palmitoyltransferase that catalyzes the addition of palmitate onto various protein substrates such as CTNND2, CD36, GSDMD, NLRP3, NOD1, NOD2, STAT3 and S1PR1 thus plays a role in various biological processes including cell adhesion, inflammation, fatty acid uptake, bacterial sensing or cardiac functions. Plays an important role in the regulation of synapse efficacy by mediating palmitoylation of delta-catenin/CTNND2, thereby increasing synaptic delivery and surface stabilization of alpha-amino-3-hydroxy-5-methyl-4-isoxazole propionic acid receptors (AMPARs). Under basal conditions, remains at the synaptic membrane through FYN-mediated phosphorylation that prevents association with endocytic proteins. Neuronal activity enhances the internalization and trafficking of DHHC5 from spines to dendritic shafts where it palmitoylates delta-catenin/CTNND2. Regulates cell adhesion at the plasma membrane by palmitoylating GOLGA7B and DSG2. Plays a role in innate immune response by mediating the palmitoylation of NOD1 and NOD2 and their proper recruitment to the bacterial entry site and phagosomes. Also participates in fatty acid uptake by palmitoylating CD36 and thereby targeting it to the plasma membrane. Upon binding of fatty acids to CD36, gets phosphorylated by LYN leading to inactivation and subsequent CD36 caveolar endocytosis. Controls oligodendrocyte development by catalyzing STAT3 palmitoylation. Acts as a regulator of inflammatory response by mediating palmitoylation of NLRP3 and GSDMD. Palmitoylates NLRP3 to promote inflammasome assembly and activation. Activates pyroptosis by catalyzing palmitoylation of gasdermin-D (GSDMD), thereby promoting membrane translocation and pore formation of GSDMD. The chain is Palmitoyltransferase ZDHHC5 (ZDHHC5) from Bos taurus (Bovine).